The chain runs to 651 residues: Probable potassium transport system protein Kup (651 aa).

Over residues 1 to 16 the composition is skewed to basic and acidic residues; sequence MRDSPGSKSSSERWHD. The segment at 1 to 31 is disordered; the sequence is MRDSPGSKSSSERWHDTMAVSDPTAEGKDES. Helical transmembrane passes span 38 to 58, 74 to 94, 129 to 149, 168 to 188, 197 to 217, 232 to 252, 276 to 296, 309 to 329, 366 to 386, 396 to 416, 423 to 443, and 448 to 468; these read FWAL…TSPL, VTPA…FIVV, LLLL…SMIT, LQDY…AVQS, AFAP…VLHI, AIHF…LVFL, WFCL…ALIL, LAPA…TVIA, IYLP…VLLF, YGIA…VVVW, PAAA…FFSA, and LFDG…LIWT.

Belongs to the HAK/KUP transporter (TC 2.A.72) family.

The protein resides in the cell inner membrane. It carries out the reaction K(+)(in) + H(+)(in) = K(+)(out) + H(+)(out). In terms of biological role, transport of potassium into the cell. Likely operates as a K(+):H(+) symporter. The chain is Probable potassium transport system protein Kup from Nitrobacter winogradskyi (strain ATCC 25391 / DSM 10237 / CIP 104748 / NCIMB 11846 / Nb-255).